Consider the following 328-residue polypeptide: tRNA uridine(34) hydroxylase (328 aa).

One can recognise a Rhodanese domain in the interval 123-217 (SDPDVLLVDT…YLEEVPQEES (95 aa)). C177 functions as the Cysteine persulfide intermediate in the catalytic mechanism.

This sequence belongs to the TrhO family.

The catalysed reaction is uridine(34) in tRNA + AH2 + O2 = 5-hydroxyuridine(34) in tRNA + A + H2O. In terms of biological role, catalyzes oxygen-dependent 5-hydroxyuridine (ho5U) modification at position 34 in tRNAs. This is tRNA uridine(34) hydroxylase from Psychromonas ingrahamii (strain DSM 17664 / CCUG 51855 / 37).